The chain runs to 472 residues: Karilysin (472 aa).

The first 20 residues, 1–20 (MKRFILLFFLSTIAIFKVYS), serve as a signal peptide directing secretion. Residues 21–34 (QRLYDNGPLTGDNN) constitute a propeptide, activation peptide. Zn(2+) is bound by residues H102, D104, H117, H133, and H155. Residue E156 is the Proton donor/acceptor of the active site. H159 and H165 together coordinate Zn(2+). A propeptide spans 196 to 386 (YGYPFSISGP…AVSCSRTISP (191 aa)) (removed in short form). The propeptide at 387–472 (FTLSPNPATD…QTYTQKLIKK (86 aa)) is removed in long form.

This sequence belongs to the peptidase M10A family. Requires Zn(2+) as cofactor. Post-translationally, processes itself into the mature 18-kDa enzyme (Kly18) through sequential autoproteolytic cleavage at both the N- and C-termini. However, the maturation intermediate Kly38 is found to be more active than Kly18 and the rate for its processing is slow, which raises the question as to whether Kly38 is a physiologically relevant entity.

It localises to the secreted. With respect to regulation, autoprocessing and proteolytic activity are completely inhibited by EDTA and 1,10-phenanthroline in vitro. Proteolytic activity is 3-fold enhanced by Ca(2+) due to stabilization of the protein structure but inhibited by an excess of Zn(2+). Inhibitory studies of karilysin identified several phage display-selected peptides with apparent inhibition constants (Ki) in the micromolar range, among which is the tetrapeptide SWFP (Ki=10.7 uM). Metalloprotease able to cleave casein, gelatin, elastin, fibrinogen and fibronectin. Shows exclusive preference for hydrophobic residues, especially Leu, Tyr and Met, at the P1' position of substrates, and for Pro or Ala at P3. Can efficiently cleave the antimicrobial peptide LL-37 which is a component of the immune system, leading to a significant reduction of its bactericidal activity. Is also able to inhibit all pathways of the human complement system. The classical and lectin complement pathways are inhibited because of the efficient degradation of mannose-binding lectin, ficolin-2, ficolin-3, and C4 by karilysin, whereas inhibition of the terminal pathway is caused by cleavage of C5. Thus, karilysin appears to be a major virulence factor of T.forsythia that contributes to evasion of the human immune response and periodontal disease. Seems to act synergistically with gingipains from the periodontal pathogen P.gingivalis present at the same sites of infection. In Tannerella forsythia (strain ATCC 43037 / JCM 10827 / CCUG 21028 A / KCTC 5666 / FDC 338) (Bacteroides forsythus), this protein is Karilysin (kly).